The chain runs to 536 residues: Phosphoenolpyruvate carboxykinase (ATP) (536 aa).

Substrate-binding residues include Arg-61, Tyr-195, and Lys-201. ATP-binding positions include Lys-201, His-220, and 236 to 244 (GLSGTGKTT). The Mn(2+) site is built by Lys-201 and His-220. Asp-257 is a binding site for Mn(2+). ATP is bound by residues Glu-285, Arg-322, and Thr-447. Arg-322 is a substrate binding site.

Belongs to the phosphoenolpyruvate carboxykinase (ATP) family. The cofactor is Mn(2+).

The protein resides in the cytoplasm. The catalysed reaction is oxaloacetate + ATP = phosphoenolpyruvate + ADP + CO2. It functions in the pathway carbohydrate biosynthesis; gluconeogenesis. Its function is as follows. Involved in the gluconeogenesis. Catalyzes the conversion of oxaloacetate (OAA) to phosphoenolpyruvate (PEP) through direct phosphoryl transfer between the nucleoside triphosphate and OAA. The chain is Phosphoenolpyruvate carboxykinase (ATP) from Rhizobium etli (strain ATCC 51251 / DSM 11541 / JCM 21823 / NBRC 15573 / CFN 42).